The following is an 837-amino-acid chain: Telomere length regulation protein TEL2 homolog (837 aa).

At M1 the chain carries N-acetylmethionine. Hydroxyproline is present on residues P374, P419, and P422. A disordered region spans residues 444–472 (QPAGDGASEAGTSLVPATAEPPAETPAEI). The residue at position 456 (S456) is a Phosphoserine. Residues 459–471 (PATAEPPAETPAE) are compositionally biased toward low complexity. S485 carries the phosphoserine; by CK2 modification. A phosphoserine mark is found at S487 and S491. Residues 627–651 (GCLGRTPQPGSPSPNTPCLPEAAVS) are disordered. 2 positions are modified to phosphoserine: S688 and S836.

This sequence belongs to the TEL2 family. In terms of assembly, component of the TTT complex composed of TELO2, TTI1 and TTI2. Interacts with ATM, ATR, MTOR, PRKDC, RUVBL2, TTI1, TTI2, SMG1 and TRRAP. Component of the mTORC1 and mTORC2 complexes. Interacts (phosphorylated form) with PIH1D1 which mediates interaction of TELO2 with the R2TP complex composed of RUVBL1, RUVBL2, PIH1D1, and RPAP3. In terms of processing, hydroxylation by PHD3 is required for a proper interaction with ATR, and activation of the ATR/CHK1/p53 pathway following DNA damage. Phosphorylated at Ser-485 by CK2 following growth factor deprivation, leading to its subsequent ubiquitination by the SCF(FBXO9) complex. Phosphorylation by CK2 only takes place when TELO2 is bound to mTORC1, not mTORC2; leading to selective ubiquitination of mTORC1-associated protein. Post-translationally, ubiquitinated by the SCF(FBXO9) complex following phosphorylation by CK2 in response to growth factor deprivation, leading to its degradation by the proteasome. Only mTORC1-associated protein is ubiquitinated and degraded, leading to selective inactivation of mTORC1 to restrain cell growth and protein translation, while mTORC2 is activated due to the relief of feedback inhibition by mTORC1.

Its subcellular location is the cytoplasm. It is found in the membrane. It localises to the nucleus. The protein localises to the chromosome. The protein resides in the telomere. Its function is as follows. Regulator of the DNA damage response (DDR). Part of the TTT complex that is required to stabilize protein levels of the phosphatidylinositol 3-kinase-related protein kinase (PIKK) family proteins. The TTT complex is involved in the cellular resistance to DNA damage stresses, like ionizing radiation (IR), ultraviolet (UV) and mitomycin C (MMC). Together with the TTT complex and HSP90 may participate in the proper folding of newly synthesized PIKKs. Promotes assembly, stabilizes and maintains the activity of mTORC1 and mTORC2 complexes, which regulate cell growth and survival in response to nutrient and hormonal signals. May be involved in telomere length regulation. This is Telomere length regulation protein TEL2 homolog (TELO2) from Homo sapiens (Human).